A 406-amino-acid chain; its full sequence is Tryptophan synthase beta chain (406 aa).

N6-(pyridoxal phosphate)lysine is present on lysine 99.

This sequence belongs to the TrpB family. Tetramer of two alpha and two beta chains. It depends on pyridoxal 5'-phosphate as a cofactor.

The enzyme catalyses (1S,2R)-1-C-(indol-3-yl)glycerol 3-phosphate + L-serine = D-glyceraldehyde 3-phosphate + L-tryptophan + H2O. It functions in the pathway amino-acid biosynthesis; L-tryptophan biosynthesis; L-tryptophan from chorismate: step 5/5. In terms of biological role, the beta subunit is responsible for the synthesis of L-tryptophan from indole and L-serine. This is Tryptophan synthase beta chain from Allorhizobium ampelinum (strain ATCC BAA-846 / DSM 112012 / S4) (Agrobacterium vitis (strain S4)).